We begin with the raw amino-acid sequence, 48 residues long: MKNTKKITLACQVCLAKNYSTNKSVTNRLEIKKFCKHCNMQTLHKEEK.

It belongs to the bacterial ribosomal protein bL33 family.

This chain is Large ribosomal subunit protein bL33A, found in Metamycoplasma arthritidis (strain 158L3-1) (Mycoplasma arthritidis).